The primary structure comprises 171 residues: 3-hydroxydecanoyl-[acyl-carrier-protein] dehydratase (171 aa).

The active site involves His71.

Belongs to the thioester dehydratase family. FabA subfamily. As to quaternary structure, homodimer.

The protein resides in the cytoplasm. It catalyses the reaction a (3R)-hydroxyacyl-[ACP] = a (2E)-enoyl-[ACP] + H2O. It carries out the reaction (3R)-hydroxydecanoyl-[ACP] = (2E)-decenoyl-[ACP] + H2O. The catalysed reaction is (2E)-decenoyl-[ACP] = (3Z)-decenoyl-[ACP]. Its pathway is lipid metabolism; fatty acid biosynthesis. In terms of biological role, necessary for the introduction of cis unsaturation into fatty acids. Catalyzes the dehydration of (3R)-3-hydroxydecanoyl-ACP to E-(2)-decenoyl-ACP and then its isomerization to Z-(3)-decenoyl-ACP. Can catalyze the dehydratase reaction for beta-hydroxyacyl-ACPs with saturated chain lengths up to 16:0, being most active on intermediate chain length. The polypeptide is 3-hydroxydecanoyl-[acyl-carrier-protein] dehydratase (Agrobacterium fabrum (strain C58 / ATCC 33970) (Agrobacterium tumefaciens (strain C58))).